The following is a 110-amino-acid chain: Chloride intracellular channel protein 1 (110 aa).

Ala-2 is modified (N-acetylalanine). The interval Ala-2–Pro-90 is required for insertion into the membrane. Lys-13 is modified (N6-acetyllysine). Positions Cys-24–Ser-27 match the G-site motif. Cys-24 and Cys-59 are oxidised to a cystine. Residues Phe-26–Val-46 form a helical membrane-spanning segment.

It belongs to the chloride channel CLIC family. As to quaternary structure, monomer. Homodimer (in vitro). Interacts with TRAPPC2. Dimerization requires a conformation change that leads to the exposure of a large hydrophobic surface. In vivo, this may lead to membrane insertion.

The protein localises to the nucleus. It is found in the nucleus membrane. It localises to the cytoplasm. Its subcellular location is the cell membrane. The protein resides in the endoplasmic reticulum. It catalyses the reaction L-dehydroascorbate + 2 glutathione = glutathione disulfide + L-ascorbate. The enzyme catalyses chloride(in) = chloride(out). The catalysed reaction is iodide(out) = iodide(in). It carries out the reaction thiocyanate(in) = thiocyanate(out). It catalyses the reaction nitrate(in) = nitrate(out). The enzyme catalyses bromide(in) = bromide(out). The catalysed reaction is fluoride(in) = fluoride(out). Functionally, in the soluble state, catalyzes glutaredoxin-like thiol disulfide exchange reactions with reduced glutathione as electron donor. Reduces selenite and dehydroascorbate and may act as an antioxidant during oxidative stress response. Can insert into membranes and form voltage-dependent multi-ion conductive channels. Membrane insertion seems to be redox-regulated and may occur only under oxidizing conditions. Involved in regulation of the cell cycle. This is Chloride intracellular channel protein 1 (CLIC1) from Sus scrofa (Pig).